Reading from the N-terminus, the 452-residue chain is tRNA modification GTPase MnmE (452 aa).

Positions 22, 79, and 119 each coordinate (6S)-5-formyl-5,6,7,8-tetrahydrofolate. In terms of domain architecture, TrmE-type G spans 215–375 (GMKVVIAGRP…LRQHLKQSMG (161 aa)). Residue asparagine 225 participates in K(+) binding. GTP is bound by residues 225 to 230 (NAGKSS), 244 to 250 (TDIAGTT), 269 to 272 (DTAG), and 333 to 336 (NKAD). Serine 229 contributes to the Mg(2+) binding site. The K(+) site is built by threonine 244, isoleucine 246, and threonine 249. Threonine 250 is a Mg(2+) binding site. Lysine 452 lines the (6S)-5-formyl-5,6,7,8-tetrahydrofolate pocket.

It belongs to the TRAFAC class TrmE-Era-EngA-EngB-Septin-like GTPase superfamily. TrmE GTPase family. As to quaternary structure, homodimer. Heterotetramer of two MnmE and two MnmG subunits. K(+) serves as cofactor.

Its subcellular location is the cytoplasm. Functionally, exhibits a very high intrinsic GTPase hydrolysis rate. Involved in the addition of a carboxymethylaminomethyl (cmnm) group at the wobble position (U34) of certain tRNAs, forming tRNA-cmnm(5)s(2)U34. The chain is tRNA modification GTPase MnmE from Histophilus somni (strain 2336) (Haemophilus somnus).